The sequence spans 606 residues: Medium-chain acyl-CoA ligase ACSF2, mitochondrial (606 aa).

The N-terminal 13 residues, 1 to 13 (MSSKILLTNLRTS), are a transit peptide targeting the mitochondrion. ATP contacts are provided by residues 256–264 (TSGTTGKPK), aspartate 484, arginine 499, and lysine 590.

The protein belongs to the ATP-dependent AMP-binding enzyme family.

Its subcellular location is the mitochondrion. The catalysed reaction is a medium-chain fatty acid + ATP + CoA = a medium-chain fatty acyl-CoA + AMP + diphosphate. It catalyses the reaction octanoate + ATP + CoA = octanoyl-CoA + AMP + diphosphate. Acyl-CoA synthases catalyze the initial reaction in fatty acid metabolism, by forming a thioester with CoA. Has some preference toward medium-chain substrates. Plays a role in adipocyte differentiation. This is Medium-chain acyl-CoA ligase ACSF2, mitochondrial from Danio rerio (Zebrafish).